A 476-amino-acid chain; its full sequence is Dihydrolipoyl dehydrogenase (476 aa).

Residues 36–45 (EHQERLGGVC), Lys-54, and Ala-117 contribute to the FAD site. Cysteines 45 and 50 form a disulfide. NAD(+)-binding positions include 182-186 (GGGII), Asp-205, Val-238, and 271-274 (AIGR). Positions 314 and 322 each coordinate FAD. His-446 serves as the catalytic Proton acceptor.

It belongs to the class-I pyridine nucleotide-disulfide oxidoreductase family. Homodimer. FAD is required as a cofactor.

Its subcellular location is the cytoplasm. The catalysed reaction is N(6)-[(R)-dihydrolipoyl]-L-lysyl-[protein] + NAD(+) = N(6)-[(R)-lipoyl]-L-lysyl-[protein] + NADH + H(+). Its function is as follows. Lipoamide dehydrogenase is a component of the alpha-ketoacid dehydrogenase complexes. The polypeptide is Dihydrolipoyl dehydrogenase (lpdA) (Buchnera aphidicola subsp. Schizaphis graminum (strain Sg)).